The following is a 181-amino-acid chain: Large ribosomal subunit protein uL10 (181 aa).

This sequence belongs to the universal ribosomal protein uL10 family. In terms of assembly, part of the ribosomal stalk of the 50S ribosomal subunit. The N-terminus interacts with L11 and the large rRNA to form the base of the stalk. The C-terminus forms an elongated spine to which L12 dimers bind in a sequential fashion forming a multimeric L10(L12)X complex.

In terms of biological role, forms part of the ribosomal stalk, playing a central role in the interaction of the ribosome with GTP-bound translation factors. This Bradyrhizobium diazoefficiens (strain JCM 10833 / BCRC 13528 / IAM 13628 / NBRC 14792 / USDA 110) protein is Large ribosomal subunit protein uL10.